The chain runs to 205 residues: Large ribosomal subunit protein bL25A (205 aa).

Belongs to the bacterial ribosomal protein bL25 family. CTC subfamily. In terms of assembly, part of the 50S ribosomal subunit; part of the 5S rRNA/L5/L18/L25 subcomplex. Contacts the 5S rRNA. Binds to the 5S rRNA independently of L5 and L18.

Its function is as follows. This is one of the proteins that binds to the 5S RNA in the ribosome where it forms part of the central protuberance. The chain is Large ribosomal subunit protein bL25A from Symbiobacterium thermophilum (strain DSM 24528 / JCM 14929 / IAM 14863 / T).